Here is a 607-residue protein sequence, read N- to C-terminus: Elongation factor 4 (607 aa).

In terms of domain architecture, tr-type G spans 11-193; the sequence is KKIRNFSIIA…QIVELVPPPT (183 aa). Residues 23–28 and 140–143 each bind GTP; these read DHGKST and NKID.

The protein belongs to the TRAFAC class translation factor GTPase superfamily. Classic translation factor GTPase family. LepA subfamily.

It is found in the cell membrane. The enzyme catalyses GTP + H2O = GDP + phosphate + H(+). Required for accurate and efficient protein synthesis under certain stress conditions. May act as a fidelity factor of the translation reaction, by catalyzing a one-codon backward translocation of tRNAs on improperly translocated ribosomes. Back-translocation proceeds from a post-translocation (POST) complex to a pre-translocation (PRE) complex, thus giving elongation factor G a second chance to translocate the tRNAs correctly. Binds to ribosomes in a GTP-dependent manner. This Exiguobacterium sp. (strain ATCC BAA-1283 / AT1b) protein is Elongation factor 4.